The sequence spans 213 residues: Ribosomal RNA small subunit methyltransferase G (213 aa).

S-adenosyl-L-methionine is bound by residues glycine 72, phenylalanine 77, 125–126, and arginine 141; that span reads IE.

Belongs to the methyltransferase superfamily. RNA methyltransferase RsmG family.

It is found in the cytoplasm. The enzyme catalyses guanosine(527) in 16S rRNA + S-adenosyl-L-methionine = N(7)-methylguanosine(527) in 16S rRNA + S-adenosyl-L-homocysteine. Specifically methylates the N7 position of guanine in position 527 of 16S rRNA. This is Ribosomal RNA small subunit methyltransferase G from Rhizobium meliloti (strain 1021) (Ensifer meliloti).